The primary structure comprises 299 residues: Taste receptor type 2 member 4 (299 aa).

Residues 1 to 9 are Extracellular-facing; that stretch reads MLRLFYFSA. A helical transmembrane segment spans residues 10-30; sequence IIASVILNFVGIIMNLFITVV. Over 31 to 46 the chain is Cytoplasmic; that stretch reads NCKTWVKSHRISSSDR. A helical membrane pass occupies residues 47–67; it reads ILFSLGITRFLMLGLFLVNTI. Residues 68–81 are Extracellular-facing; sequence YFVSSNXERSVYLS. Residues 82–102 traverse the membrane as a helical segment; sequence AFFVLCFMFLDSSSLWFVTLL. At 103-131 the chain is on the cytoplasmic side; the sequence is NILYCVKITNFQHSVFLLLKRNISPKIPR. The helical transmembrane segment at 132–152 threads the bilayer; that stretch reads LLLACVLISAFTTCLYITLSQ. Residues 153-172 lie on the Extracellular side of the membrane; that stretch reads ASPFPELVTTRNNTSFNINE. 2 N-linked (GlcNAc...) asparagine glycosylation sites follow: N164 and N165. The chain crosses the membrane as a helical span at residues 173-193; that stretch reads GILSLVVSLVLSSSLQFIINV. The Cytoplasmic segment spans residues 194–230; the sequence is TSASLLIHSLRRHIQKMQKNATGFWNPQTEAHVGAMK. A helical membrane pass occupies residues 231 to 251; the sequence is LMVYFLILYIPYSVATLVQYL. Topologically, residues 252-262 are extracellular; the sequence is PFYAGMDMGTK. The helical transmembrane segment at 263–283 threads the bilayer; that stretch reads SICLIFATLYSPGHSVLIIIT. At 284 to 299 the chain is on the cytoplasmic side; it reads HPKLKTTAKKILCFKK.

It belongs to the G-protein coupled receptor T2R family.

It is found in the membrane. The protein localises to the cell projection. The protein resides in the cilium membrane. In terms of biological role, gustducin-coupled receptor implicated in the perception of bitter compounds in the oral cavity and the gastrointestinal tract. Signals through PLCB2 and the calcium-regulated cation channel TRPM5. In airway epithelial cells, binding of denatonium increases the intracellular calcium ion concentration and stimulates ciliary beat frequency. The sequence is that of Taste receptor type 2 member 4 (TAS2R4) from Pan troglodytes (Chimpanzee).